A 226-amino-acid chain; its full sequence is 2-C-methyl-D-erythritol 4-phosphate cytidylyltransferase (226 aa).

The protein belongs to the IspD/TarI cytidylyltransferase family. IspD subfamily.

The enzyme catalyses 2-C-methyl-D-erythritol 4-phosphate + CTP + H(+) = 4-CDP-2-C-methyl-D-erythritol + diphosphate. The protein operates within isoprenoid biosynthesis; isopentenyl diphosphate biosynthesis via DXP pathway; isopentenyl diphosphate from 1-deoxy-D-xylulose 5-phosphate: step 2/6. Catalyzes the formation of 4-diphosphocytidyl-2-C-methyl-D-erythritol from CTP and 2-C-methyl-D-erythritol 4-phosphate (MEP). This chain is 2-C-methyl-D-erythritol 4-phosphate cytidylyltransferase, found in Rhodococcus jostii (strain RHA1).